The primary structure comprises 177 residues: Large ribosomal subunit protein uL6 (177 aa).

It belongs to the universal ribosomal protein uL6 family. In terms of assembly, part of the 50S ribosomal subunit.

Functionally, this protein binds to the 23S rRNA, and is important in its secondary structure. It is located near the subunit interface in the base of the L7/L12 stalk, and near the tRNA binding site of the peptidyltransferase center. In Aeromonas hydrophila subsp. hydrophila (strain ATCC 7966 / DSM 30187 / BCRC 13018 / CCUG 14551 / JCM 1027 / KCTC 2358 / NCIMB 9240 / NCTC 8049), this protein is Large ribosomal subunit protein uL6.